The sequence spans 306 residues: 17-beta-hydroxysteroid dehydrogenase type 3 (306 aa).

44-73 (GQWAVITGAGDGIGKAYSFELARHGLNVVL) is a binding site for NADP(+). Residue S181 coordinates substrate. Y194 functions as the Proton acceptor in the catalytic mechanism.

The protein belongs to the short-chain dehydrogenases/reductases (SDR) family. 17-beta-HSD 3 subfamily.

The protein resides in the endoplasmic reticulum. It carries out the reaction a 17beta-hydroxy steroid + NADP(+) = a 17-oxo steroid + NADPH + H(+). The enzyme catalyses testosterone + NADP(+) = androst-4-ene-3,17-dione + NADPH + H(+). It catalyses the reaction 17beta-estradiol + NADP(+) = estrone + NADPH + H(+). The catalysed reaction is 3beta-hydroxyandrost-5-en-17-one + NADPH + H(+) = androst-5-en-3beta,17beta-diol + NADP(+). It carries out the reaction 17beta-hydroxy-5alpha-androstan-3-one + NADP(+) = 5alpha-androstan-3,17-dione + NADPH + H(+). The enzyme catalyses androsterone + NADPH + H(+) = 5alpha-androstane-3alpha,17beta-diol + NADP(+). It catalyses the reaction 3beta-hydroxy-5alpha-androstan-17-one + NADPH + H(+) = 5alpha-androstane-3beta,17beta-diol + NADP(+). The catalysed reaction is androst-4-ene-3,11,17-trione + NADPH + H(+) = 17beta-hydroxyandrost-4-ene-3,11-dione + NADP(+). It carries out the reaction 11beta-hydroxyandrost-4-ene-3,17-dione + NADPH + H(+) = 11beta,17beta-dihydroxyandrost-4-ene-3-one + NADP(+). Its pathway is hormone biosynthesis; testosterone biosynthesis. It functions in the pathway steroid metabolism. In terms of biological role, catalyzes the conversion of 17-oxosteroids to 17beta-hydroxysteroids. Favors the reduction of androstenedione to testosterone. Testosterone is the key androgen driving male development and function. Uses NADPH while the two other EDH17B enzymes use NADH. Androgens such as epiandrosterone, dehydroepiandrosterone, androsterone and androstanedione are accepted as substrates and reduced at C-17. Can reduce 11-ketoandrostenedione as well as 11beta-hydroxyandrostenedione at C-17 to the respective testosterone forms. Plays a role in the rate-limiting-step for the maximum level of testosterone production by the testis but does not affect basal testosterone production. The protein is 17-beta-hydroxysteroid dehydrogenase type 3 of Rattus norvegicus (Rat).